We begin with the raw amino-acid sequence, 174 residues long: Crossover junction endodeoxyribonuclease RuvC (174 aa).

Catalysis depends on residues Asp-8, Glu-67, and Asp-139. Asp-8, Glu-67, and Asp-139 together coordinate Mg(2+).

Belongs to the RuvC family. In terms of assembly, homodimer which binds Holliday junction (HJ) DNA. The HJ becomes 2-fold symmetrical on binding to RuvC with unstacked arms; it has a different conformation from HJ DNA in complex with RuvA. In the full resolvosome a probable DNA-RuvA(4)-RuvB(12)-RuvC(2) complex forms which resolves the HJ. Mg(2+) is required as a cofactor.

The protein resides in the cytoplasm. The catalysed reaction is Endonucleolytic cleavage at a junction such as a reciprocal single-stranded crossover between two homologous DNA duplexes (Holliday junction).. In terms of biological role, the RuvA-RuvB-RuvC complex processes Holliday junction (HJ) DNA during genetic recombination and DNA repair. Endonuclease that resolves HJ intermediates. Cleaves cruciform DNA by making single-stranded nicks across the HJ at symmetrical positions within the homologous arms, yielding a 5'-phosphate and a 3'-hydroxyl group; requires a central core of homology in the junction. The consensus cleavage sequence is 5'-(A/T)TT(C/G)-3'. Cleavage occurs on the 3'-side of the TT dinucleotide at the point of strand exchange. HJ branch migration catalyzed by RuvA-RuvB allows RuvC to scan DNA until it finds its consensus sequence, where it cleaves and resolves the cruciform DNA. The chain is Crossover junction endodeoxyribonuclease RuvC from Pseudomonas syringae pv. syringae (strain B728a).